The sequence spans 1019 residues: Katanin p80 WD40 repeat-containing subunit B1 homolog KTN80.1 (1019 aa).

7 WD repeats span residues 13–53 (AHSG…SPMS), 56–95 (GHTS…MVRA), 98–137 (GHRS…CIQT), 140–181 (GHTR…HEFK), 183–221 (HEGP…LIGT), 224–264 (PEAT…DGVD), and 266–303 (GWST…LEPY). Positions 114 to 130 (FLASGSSDTNLRVWDTR) match the DWD box motif. Disordered regions lie at residues 388 to 424 (FGPA…TKSG), 455 to 474 (KSGL…LSEQ), 517 to 581 (IHRS…GSRE), and 607 to 652 (RGEK…RARS). The span at 465–474 (QTQNAFLSEQ) shows a compositional bias: polar residues. Residues 553–572 (IPSKTERVLSREKPGDEQKN) are compositionally biased toward basic and acidic residues. Over residues 614–628 (TEGASTTIEQNNNAV) the composition is skewed to polar residues.

The protein belongs to the WD repeat KATNB1 family. In terms of assembly, component of KTN80-KTN1 complexes composed of a hexamer of KTN1-KTN80 heterodimers that sense microtubule (MT) geometry to confer precise MT severing. Interacts directly with AAA1/KTN1 and KTN80.3, and weakly with KTN80.4. As to expression, expressed at low levels in siliques, flowers, leaves, stems and roots.

The protein resides in the cytoplasm. Its subcellular location is the cytoskeleton. Its function is as follows. May participate in a complex which severs microtubules in an ATP-dependent manner. Microtubule severing may promote rapid reorganization of cellular microtubule arrays. Confers precision to microtubule (MT) severing by specific targeting of KTN1 to MT cleavage sites such as crossover or branching nucleation sites. Together with other KTN80s, regulates cell elongation by modulating MT organization. This is Katanin p80 WD40 repeat-containing subunit B1 homolog KTN80.1 from Arabidopsis thaliana (Mouse-ear cress).